The following is a 161-amino-acid chain: Urease accessory protein UreE (161 aa).

This sequence belongs to the UreE family. As to quaternary structure, homodimer.

Its subcellular location is the cytoplasm. Functionally, involved in urease metallocenter assembly. Binds nickel. Probably functions as a nickel donor during metallocenter assembly. It is not essential for urease activity. In Proteus mirabilis (strain HI4320), this protein is Urease accessory protein UreE.